The sequence spans 232 residues: Orotidine 5'-phosphate decarboxylase (232 aa).

Substrate contacts are provided by residues Asp13, Lys35, 62 to 71 (DLKFHDIPNT), Thr121, Arg182, Gln191, Gly211, and Arg212. The Proton donor role is filled by Lys64.

Belongs to the OMP decarboxylase family. Type 1 subfamily. As to quaternary structure, homodimer.

The catalysed reaction is orotidine 5'-phosphate + H(+) = UMP + CO2. Its pathway is pyrimidine metabolism; UMP biosynthesis via de novo pathway; UMP from orotate: step 2/2. Its function is as follows. Catalyzes the decarboxylation of orotidine 5'-monophosphate (OMP) to uridine 5'-monophosphate (UMP). The polypeptide is Orotidine 5'-phosphate decarboxylase (Teredinibacter turnerae (strain ATCC 39867 / T7901)).